The following is a 412-amino-acid chain: Non-specific lipid-transfer protein-like 2 (412 aa).

The short motif at 410–412 (SKI) is the Microbody targeting signal element.

The protein belongs to the thiolase-like superfamily. Thiolase family. As to expression, expressed in intestine, hypodermis and body-wall muscle.

It localises to the peroxisome. The enzyme catalyses choloyl-CoA + propanoyl-CoA = 3alpha,7alpha,12alpha-trihydroxy-24-oxo-5beta-cholestan-26-oyl-CoA + CoA. Its activity is regulated as follows. Inhibited by acetyl-CoA. Functionally, catalyzes the thiolytic cleavage of 3-ketoacyl-CoA with 8-16 carbon residues in the acyl group using a ping-pong mechanism whereby binding to 3-ketooctanoyl-CoA results in the release of acetyl-CoA and the subsequent addition of CoA produces 3-ketohexanohyl-CoA. Involved in the biosynthesis of the dauer pheromone by providing short chains of fatty acid that are attached to the ascarylose sugars of the pheromone. This chain is Non-specific lipid-transfer protein-like 2, found in Caenorhabditis elegans.